The chain runs to 134 residues: Profilin-3 (134 aa).

C13 and C118 are oxidised to a cystine. An Involved in PIP2 interaction motif is present at residues 84–100 (AVIRGKKGSGGITIKKT). A Phosphothreonine modification is found at T114.

The protein belongs to the profilin family. As to quaternary structure, occurs in many kinds of cells as a complex with monomeric actin in a 1:1 ratio. In terms of processing, phosphorylated by MAP kinases.

It localises to the cytoplasm. The protein localises to the cytoskeleton. Its function is as follows. Binds to actin and affects the structure of the cytoskeleton. At high concentrations, profilin prevents the polymerization of actin, whereas it enhances it at low concentrations. This chain is Profilin-3, found in Olea europaea (Common olive).